Consider the following 228-residue polypeptide: ATP-dependent dethiobiotin synthetase BioD (228 aa).

Aspartate 14–leucine 19 lines the ATP pocket. Threonine 18 serves as a coordination point for Mg(2+). Residue lysine 39 is part of the active site. ATP-binding positions include aspartate 56, glutamate 117 to glycine 120, and proline 206 to leucine 208. Aspartate 56 and glutamate 117 together coordinate Mg(2+).

This sequence belongs to the dethiobiotin synthetase family. Homodimer. Requires Mg(2+) as cofactor.

The protein localises to the cytoplasm. The catalysed reaction is (7R,8S)-7,8-diammoniononanoate + CO2 + ATP = (4R,5S)-dethiobiotin + ADP + phosphate + 3 H(+). It participates in cofactor biosynthesis; biotin biosynthesis; biotin from 7,8-diaminononanoate: step 1/2. Functionally, catalyzes a mechanistically unusual reaction, the ATP-dependent insertion of CO2 between the N7 and N8 nitrogen atoms of 7,8-diaminopelargonic acid (DAPA, also called 7,8-diammoniononanoate) to form a ureido ring. The polypeptide is ATP-dependent dethiobiotin synthetase BioD (Cellvibrio japonicus (strain Ueda107) (Pseudomonas fluorescens subsp. cellulosa)).